The following is a 336-amino-acid chain: Ornithine carbamoyltransferase, catabolic (336 aa).

Carbamoyl phosphate contacts are provided by residues 57–60 (STRT), Gln-84, Arg-108, and 135–138 (HPTQ). L-ornithine-binding positions include Asn-168, Asp-232, and 236-237 (SM). Carbamoyl phosphate-binding positions include 274–275 (CL) and Arg-321.

This sequence belongs to the aspartate/ornithine carbamoyltransferase superfamily. OTCase family.

It localises to the cytoplasm. The enzyme catalyses carbamoyl phosphate + L-ornithine = L-citrulline + phosphate + H(+). Its pathway is amino-acid degradation; L-arginine degradation via ADI pathway; carbamoyl phosphate from L-arginine: step 2/2. Functionally, reversibly catalyzes the transfer of the carbamoyl group from carbamoyl phosphate (CP) to the N(epsilon) atom of ornithine (ORN) to produce L-citrulline. This Burkholderia mallei (strain ATCC 23344) protein is Ornithine carbamoyltransferase, catabolic.